We begin with the raw amino-acid sequence, 396 residues long: Phosphoglycerate kinase (396 aa).

Substrate-binding positions include 21–23, Arg-36, 59–62, Arg-118, and Arg-151; these read DLN and HFGR. Residues Lys-201, Glu-323, and 353-356 contribute to the ATP site; that span reads GGDT.

It belongs to the phosphoglycerate kinase family. As to quaternary structure, monomer.

It localises to the cytoplasm. The enzyme catalyses (2R)-3-phosphoglycerate + ATP = (2R)-3-phospho-glyceroyl phosphate + ADP. Its pathway is carbohydrate degradation; glycolysis; pyruvate from D-glyceraldehyde 3-phosphate: step 2/5. The sequence is that of Phosphoglycerate kinase from Brucella melitensis biotype 1 (strain ATCC 23456 / CCUG 17765 / NCTC 10094 / 16M).